The following is a 417-amino-acid chain: Lysosome-associated membrane glycoprotein 1 (417 aa).

Positions methionine 1 to alanine 28 are cleaved as a signal peptide. A first lumenal domain region spans residues alanine 29–aspartate 194. Residues alanine 29–methionine 382 are Lumenal-facing. Residues asparagine 37 and asparagine 45 are each glycosylated (N-linked (GlcNAc...) asparagine). The cysteines at positions 41 and 80 are disulfide-linked. An N-linked (GlcNAc...) (polylactosaminoglycan) asparagine glycan is attached at asparagine 62. Residues asparagine 76, asparagine 84, asparagine 103, and asparagine 107 are each glycosylated (N-linked (GlcNAc...) asparagine). Asparagine 121 and asparagine 130 each carry an N-linked (GlcNAc...) (polylactosaminoglycan) asparagine glycan. Cysteine 155 and cysteine 191 are joined by a disulfide. 2 N-linked (GlcNAc...) asparagine glycosylation sites follow: asparagine 165 and asparagine 181. Residues phenylalanine 184–lysine 221 are disordered. The segment at arginine 195–threonine 227 is hinge. An O-linked (GalNAc...) serine; partial glycan is attached at serine 197. O-linked (GalNAc...) threonine glycans are attached at residues threonine 199 and threonine 200. A compositionally biased stretch (pro residues) spans threonine 199–lysine 215. O-linked (GalNAc...) serine glycans are attached at residues serine 207, serine 209, and serine 211. Asparagine 223 and asparagine 228 each carry an N-linked (GlcNAc...) (polylactosaminoglycan) asparagine glycan. The second lumenal domain stretch occupies residues asparagine 228–methionine 382. Cysteine 231 and cysteine 269 are disulfide-bonded. 5 N-linked (GlcNAc...) asparagine glycosylation sites follow: asparagine 241, asparagine 249, asparagine 261, asparagine 293, and asparagine 322. A disulfide bridge links cysteine 338 with cysteine 375. Residues leucine 383 to serine 410 traverse the membrane as a helical segment. Residues histidine 411 to isoleucine 417 are Cytoplasmic-facing.

Belongs to the LAMP family. As to quaternary structure, interacts with ABCB9; this interaction strongly stabilizes ABCB9 and protects ABCB9 against lysosomal degradation. Interacts with FURIN. Interacts with TMEM175; inhibiting the proton channel activity of TMEM175. In terms of assembly, (Microbial infection) Interacts with Lassa virus protein glycoprotein. (Microbial infection) Interacts with mumps virus protein F; this interaction promotes protein F cleavage by FURIN. O- and N-glycosylated; some of the 18 N-linked glycans are polylactosaminoglycans. In terms of processing, (Microbial infection) The glycosylation of Asn-76 is essential for Lassa virus entry into cells.

The protein localises to the lysosome membrane. It localises to the endosome membrane. Its subcellular location is the late endosome membrane. It is found in the cell membrane. The protein resides in the cytolytic granule membrane. Lysosomal membrane glycoprotein which plays an important role in lysosome biogenesis, lysosomal pH regulation, autophagy and cholesterol homeostasis. Acts as an important regulator of lysosomal lumen pH regulation by acting as a direct inhibitor of the proton channel TMEM175, facilitating lysosomal acidification for optimal hydrolase activity. Also plays an important role in NK-cells cytotoxicity. Mechanistically, participates in cytotoxic granule movement to the cell surface and perforin trafficking to the lytic granule. In addition, protects NK-cells from degranulation-associated damage induced by their own cytotoxic granule content. Presents carbohydrate ligands to selectins. In terms of biological role, (Microbial infection) Acts as a receptor for Lassa virus glycoprotein. Also promotes fusion of the virus with host membrane in less acidic endosomes. Functionally, (Microbial infection) Supports the FURIN-mediated cleavage of mumps virus fusion protein F by interacting with both FURIN and the unprocessed form but not the processed form of the viral protein F. This Homo sapiens (Human) protein is Lysosome-associated membrane glycoprotein 1.